The sequence spans 272 residues: SWIRM domain-containing protein laf2 (272 aa).

The interval 86–148 is disordered; the sequence is HVGRWANRHS…RRRKSARGNG (63 aa). Low complexity-rich tracts occupy residues 95–120 and 127–136; these read SNVS…SYSG and RSISSSPSTI. Phosphoserine is present on residues Ser-130 and Ser-132. Thr-135 is modified (phosphothreonine). An SWIRM domain is found at 182–272; the sequence is LKAEWKGPPL…AFHEVGFFDD (91 aa).

In terms of assembly, component of the RPD3C(L) complex.

The protein localises to the nucleus. Functionally, component of the RPD3C(L) histone deacetylase complex (HDAC) responsible for the deacetylation of lysine residues on the N-terminal part of the core histones (H2A, H2B, H3 and H4). Histone deacetylation gives a tag for epigenetic repression and plays an important role in transcriptional regulation, cell cycle progression and developmental events. This chain is SWIRM domain-containing protein laf2 (laf2), found in Schizosaccharomyces pombe (strain 972 / ATCC 24843) (Fission yeast).